The chain runs to 407 residues: Phosphoglycerate kinase (407 aa).

Substrate contacts are provided by residues 24–26, arginine 39, 60–63, arginine 117, and arginine 157; these read DIN and HQSR. Residues glutamate 330 and 355-358 contribute to the ATP site; that span reads GGHI.

It belongs to the phosphoglycerate kinase family.

The protein resides in the cytoplasm. It catalyses the reaction (2R)-3-phosphoglycerate + ATP = (2R)-3-phospho-glyceroyl phosphate + ADP. It functions in the pathway carbohydrate degradation; glycolysis; pyruvate from D-glyceraldehyde 3-phosphate: step 2/5. The polypeptide is Phosphoglycerate kinase (pgk) (Archaeoglobus fulgidus (strain ATCC 49558 / DSM 4304 / JCM 9628 / NBRC 100126 / VC-16)).